The following is an 851-amino-acid chain: Putative cell signaling protein (851 aa).

3 stretches are compositionally biased toward basic and acidic residues: residues 165–176, 196–223, and 767–781; these read KLNEQDGKKSDN, DQAR…EETK, and SEER…LSHD. 2 disordered regions span residues 165-223 and 714-781; these read KLNE…EETK and DDSE…LSHD.

In terms of processing, palmitoylated.

The chain is Putative cell signaling protein from Schizosaccharomyces pombe (strain 972 / ATCC 24843) (Fission yeast).